We begin with the raw amino-acid sequence, 215 residues long: Large ribosomal subunit protein uL1 (215 aa).

Belongs to the universal ribosomal protein uL1 family. Part of the 50S ribosomal subunit.

Functionally, binds directly to 23S rRNA. Probably involved in E site tRNA release. In terms of biological role, protein L1 is also a translational repressor protein, it controls the translation of its operon by binding to its mRNA. In Cenarchaeum symbiosum (strain A), this protein is Large ribosomal subunit protein uL1.